Here is a 624-residue protein sequence, read N- to C-terminus: DNA mismatch repair protein MutL (624 aa).

Residues 355–377 (EESAPERKLPEKTPEPSYSPMKL) form a disordered region. The span at 358–368 (APERKLPEKTP) shows a compositional bias: basic and acidic residues.

The protein belongs to the DNA mismatch repair MutL/HexB family.

Its function is as follows. This protein is involved in the repair of mismatches in DNA. It is required for dam-dependent methyl-directed DNA mismatch repair. May act as a 'molecular matchmaker', a protein that promotes the formation of a stable complex between two or more DNA-binding proteins in an ATP-dependent manner without itself being part of a final effector complex. This Bacillus velezensis (strain DSM 23117 / BGSC 10A6 / LMG 26770 / FZB42) (Bacillus amyloliquefaciens subsp. plantarum) protein is DNA mismatch repair protein MutL.